A 3946-amino-acid polypeptide reads, in one-letter code: Hybrid PKS-NRPS synthetase lepA (3946 aa).

Positions 9–440 (VEPIAIVGSA…GTNAHVILEG (432 aa)) constitute a Ketosynthase family 3 (KS3) domain. Active-site for beta-ketoacyl synthase activity residues include cysteine 183, histidine 320, and histidine 363. Residues 553-871 (IFTGQGAQWA…PYAGIMRRAT (319 aa)) are malonyl-CoA:ACP transacylase (MAT) domain. An N-terminal hotdog fold region spans residues 945–1073 (HELLGRRAPD…GRLILFKGEG (129 aa)). Residues 945-1238 (HELLGRRAPD…RLQSFTEAKA (294 aa)) form a dehydratase (DH) domain region. The PKS/mFAS DH domain occupies 945–1239 (HELLGRRAPD…LQSFTEAKAL (295 aa)). Catalysis depends on histidine 977, which acts as the Proton acceptor; for dehydratase activity. The interval 1088-1239 (LSPLDREMFY…LQSFTEAKAL (152 aa)) is C-terminal hotdog fold. Aspartate 1147 (proton donor; for dehydratase activity) is an active-site residue. Positions 1380 to 1580 (LLNRFYTDGR…ATVSDLPSDG (201 aa)) are methyltransferase (MT) domain. The segment at 2093-2266 (TYWMIGLNSE…AASVIDIGLV (174 aa)) is ketoreductase (KR) domain. Positions 2352–2365 (SSQDSDQSNSTSAS) are enriched in low complexity. A disordered region spans residues 2352–2372 (SSQDSDQSNSTSASIRDQVSS). Residues 2378 to 2455 (EGTDVLLRCF…EICAEAIQKF (78 aa)) enclose the Carrier 1 domain. An O-(pantetheine 4'-phosphoryl)serine modification is found at serine 2415. The segment at 2474 to 2531 (KQATASPPEIGREEAQSTSRAGILPTDQDNDNSSDSESQRKSGASSSSGSGTRTPTSI) is disordered. Low complexity predominate over residues 2508 to 2530 (DSESQRKSGASSSSGSGTRTPTS). Residues 2547-2976 (PMSYAQSRLW…MQIQDGLLND (430 aa)) form a condensation (C) domain region. The interval 3000–3402 (FSQRAATDAN…GGLIFMGRLD (403 aa)) is adenylation (A) (KR) domain. Positions 3492-3511 (GKVDRKALQDKPLPTEPDSS) are disordered. The Carrier 2 domain maps to 3515-3594 (EALSLAEGEL…RMATLIDAEK (80 aa)). An O-(pantetheine 4'-phosphoryl)serine modification is found at serine 3554. The tract at residues 3633-3833 (LTGSTGFLGM…RFSVLMKVVP (201 aa)) is reductase (RED) domain.

This sequence in the C-terminal section; belongs to the NRP synthetase family.

Its function is as follows. Hybrid PKS-NRPS synthetase; part of the gene cluster 23 that mediates the biosynthesis of a family of 2-pyridones known as leporins. The hybrid PKS-NRPS synthetase lepA and the enoyl reductase lepG are responsible for fusion of phenylalanine with a hexaketide and subsequent release of the stable tetramic acid precursor, pre-leporin C. Because lepA lacks a designated enoylreductase (ER) domain, the required activity is provided the enoyl reductase lepG. It is possible that the dehydrogenase lepF also participates in production of pre-leporin C. Cytochrome P450 monooxygenase lepH is then required for the ring expansion step to yield leporin C. Leporin C is then presumably further oxidized by the N-hydroxylase lepD to form leporin B. LepI may possess a function in biosynthesis upstream of lepA. Leporin B is further oxidized in the presence of ferric ion to give the leporin B trimer-iron chelate, but whether or not this reaction is catalyzed by an enzyme in the pathway or by ferric ion is not determined yet. The polypeptide is Hybrid PKS-NRPS synthetase lepA (Aspergillus flavus (strain ATCC 200026 / FGSC A1120 / IAM 13836 / NRRL 3357 / JCM 12722 / SRRC 167)).